The sequence spans 357 residues: Phenylalanine--tRNA ligase alpha subunit (357 aa).

Glu-278 is a Mg(2+) binding site.

Belongs to the class-II aminoacyl-tRNA synthetase family. Phe-tRNA synthetase alpha subunit type 1 subfamily. Tetramer of two alpha and two beta subunits. The cofactor is Mg(2+).

It localises to the cytoplasm. The catalysed reaction is tRNA(Phe) + L-phenylalanine + ATP = L-phenylalanyl-tRNA(Phe) + AMP + diphosphate + H(+). This is Phenylalanine--tRNA ligase alpha subunit from Albidiferax ferrireducens (strain ATCC BAA-621 / DSM 15236 / T118) (Rhodoferax ferrireducens).